Here is a 343-residue protein sequence, read N- to C-terminus: tRNA N6-adenosine threonylcarbamoyltransferase (343 aa).

His-120 and His-124 together coordinate Fe cation. Residues 142 to 146 (VVSGG), Asp-175, Gly-188, Asp-192, and Asn-281 contribute to the substrate site. Asp-310 is a Fe cation binding site.

This sequence belongs to the KAE1 / TsaD family. Requires Fe(2+) as cofactor.

It localises to the cytoplasm. It carries out the reaction L-threonylcarbamoyladenylate + adenosine(37) in tRNA = N(6)-L-threonylcarbamoyladenosine(37) in tRNA + AMP + H(+). Functionally, required for the formation of a threonylcarbamoyl group on adenosine at position 37 (t(6)A37) in tRNAs that read codons beginning with adenine. Is involved in the transfer of the threonylcarbamoyl moiety of threonylcarbamoyl-AMP (TC-AMP) to the N6 group of A37, together with TsaE and TsaB. TsaD likely plays a direct catalytic role in this reaction. The sequence is that of tRNA N6-adenosine threonylcarbamoyltransferase from Bacillus thuringiensis subsp. konkukian (strain 97-27).